The following is a 282-amino-acid chain: ATP phosphoribosyltransferase (282 aa).

Belongs to the ATP phosphoribosyltransferase family. Long subfamily. The cofactor is Mg(2+).

Its subcellular location is the cytoplasm. It carries out the reaction 1-(5-phospho-beta-D-ribosyl)-ATP + diphosphate = 5-phospho-alpha-D-ribose 1-diphosphate + ATP. The protein operates within amino-acid biosynthesis; L-histidine biosynthesis; L-histidine from 5-phospho-alpha-D-ribose 1-diphosphate: step 1/9. Its activity is regulated as follows. Feedback inhibited by histidine. Functionally, catalyzes the condensation of ATP and 5-phosphoribose 1-diphosphate to form N'-(5'-phosphoribosyl)-ATP (PR-ATP). Has a crucial role in the pathway because the rate of histidine biosynthesis seems to be controlled primarily by regulation of HisG enzymatic activity. The polypeptide is ATP phosphoribosyltransferase (Saccharopolyspora erythraea (strain ATCC 11635 / DSM 40517 / JCM 4748 / NBRC 13426 / NCIMB 8594 / NRRL 2338)).